The chain runs to 86 residues: Large ribosomal subunit protein uL23 (86 aa).

Belongs to the universal ribosomal protein uL23 family. As to quaternary structure, part of the 50S ribosomal subunit. Contacts protein L29.

In terms of biological role, binds to 23S rRNA. One of the proteins that surrounds the polypeptide exit tunnel on the outside of the ribosome. This is Large ribosomal subunit protein uL23 from Methanocaldococcus jannaschii (strain ATCC 43067 / DSM 2661 / JAL-1 / JCM 10045 / NBRC 100440) (Methanococcus jannaschii).